Consider the following 379-residue polypeptide: UDP-4-amino-4-deoxy-L-arabinose--oxoglutarate aminotransferase (379 aa).

Lys182 carries the N6-(pyridoxal phosphate)lysine modification.

The protein belongs to the DegT/DnrJ/EryC1 family. ArnB subfamily. In terms of assembly, homodimer. It depends on pyridoxal 5'-phosphate as a cofactor.

The enzyme catalyses UDP-4-amino-4-deoxy-beta-L-arabinose + 2-oxoglutarate = UDP-beta-L-threo-pentopyranos-4-ulose + L-glutamate. It functions in the pathway nucleotide-sugar biosynthesis; UDP-4-deoxy-4-formamido-beta-L-arabinose biosynthesis; UDP-4-deoxy-4-formamido-beta-L-arabinose from UDP-alpha-D-glucuronate: step 2/3. It participates in bacterial outer membrane biogenesis; lipopolysaccharide biosynthesis. Catalyzes the conversion of UDP-4-keto-arabinose (UDP-Ara4O) to UDP-4-amino-4-deoxy-L-arabinose (UDP-L-Ara4N). The modified arabinose is attached to lipid A and is required for resistance to polymyxin and cationic antimicrobial peptides. The polypeptide is UDP-4-amino-4-deoxy-L-arabinose--oxoglutarate aminotransferase (Salmonella choleraesuis (strain SC-B67)).